The sequence spans 261 residues: UPF0246 protein AZOSEA34360 (261 aa).

It belongs to the UPF0246 family.

The polypeptide is UPF0246 protein AZOSEA34360 (Aromatoleum aromaticum (strain DSM 19018 / LMG 30748 / EbN1) (Azoarcus sp. (strain EbN1))).